Consider the following 357-residue polypeptide: UDP-N-acetylglucosamine--N-acetylmuramyl-(pentapeptide) pyrophosphoryl-undecaprenol N-acetylglucosamine transferase (357 aa).

UDP-N-acetyl-alpha-D-glucosamine is bound by residues 15-17, N124, R165, S191, and Q285; that span reads TGG.

Belongs to the glycosyltransferase 28 family. MurG subfamily.

The protein localises to the cell inner membrane. It catalyses the reaction di-trans,octa-cis-undecaprenyl diphospho-N-acetyl-alpha-D-muramoyl-L-alanyl-D-glutamyl-meso-2,6-diaminopimeloyl-D-alanyl-D-alanine + UDP-N-acetyl-alpha-D-glucosamine = di-trans,octa-cis-undecaprenyl diphospho-[N-acetyl-alpha-D-glucosaminyl-(1-&gt;4)]-N-acetyl-alpha-D-muramoyl-L-alanyl-D-glutamyl-meso-2,6-diaminopimeloyl-D-alanyl-D-alanine + UDP + H(+). It participates in cell wall biogenesis; peptidoglycan biosynthesis. Cell wall formation. Catalyzes the transfer of a GlcNAc subunit on undecaprenyl-pyrophosphoryl-MurNAc-pentapeptide (lipid intermediate I) to form undecaprenyl-pyrophosphoryl-MurNAc-(pentapeptide)GlcNAc (lipid intermediate II). The protein is UDP-N-acetylglucosamine--N-acetylmuramyl-(pentapeptide) pyrophosphoryl-undecaprenol N-acetylglucosamine transferase of Microcystis aeruginosa (strain NIES-843 / IAM M-2473).